Consider the following 609-residue polypeptide: UvrABC system protein C (609 aa).

A GIY-YIG domain is found at Thr15–Val92. The 36-residue stretch at Asp202–Leu237 folds into the UVR domain.

It belongs to the UvrC family. In terms of assembly, interacts with UvrB in an incision complex.

Its subcellular location is the cytoplasm. Functionally, the UvrABC repair system catalyzes the recognition and processing of DNA lesions. UvrC both incises the 5' and 3' sides of the lesion. The N-terminal half is responsible for the 3' incision and the C-terminal half is responsible for the 5' incision. This Coxiella burnetii (strain Dugway 5J108-111) protein is UvrABC system protein C.